A 2542-amino-acid chain; its full sequence is MDSKNLVDENCNKVAIIGIGFRFPNLKGDITPNELWSKLLNRYDGIVKNDRWNESFFKSGDISTNYAGFIPFEELKSFDPLFFGINPSEGIHMCPQQRLLLKCTWEALEDSGIDPIEIRGSNTSVFIGCSGADYQNLNKNDNKVQQEIFSSSTHSISNRVSYCFDLHGESMTIDTACSSSSNAIRRGYKSIIDGSSNISVVGGINILLDPNISKSYSRLNILSKDGKCKSFDAGADGYVRSDAAGIAILKNLNDAIKDDNNIYCVIDGSASNVDGNGFSDKSNFYSPSKSSQVECIRLALESTNGQVNENDIVYFEAHGTGTPTGDPIELESVSIALKTSENRSSDNPLLIGSFKPNIGHTESASGISSLIKCCLILKNQCFVPNLNFNKPNPLIKFDQWNLKVVTDPIDFSTLNYINKRVSIAINNFGVTGSNCCLIVSSFKGNQIRNNINNKSKSPKQYLIPFSTNSIKSLDLYKSRIDNNVEFKEFAENQIKSKSKKLIQRSVVIASNWDEFNLKSNTINTSNDKLTSNMLVSSNKKNVTMVFVFCGQGAQYSTMAKNLYDNEPIFKKSMDKIDSKLNEYYGFSILEKLRSFNENDLKGIQYSIIAQPSTCMVQISLFELYCHWGIKPSIIVGHSLGEISSSYCSGMIDLDTFCYLIYHRSMVQSKTNGLGRMLSISIGENEYNSKYSSRYPELEIACYNSPSSIVIAGKELILNEIIKELKKDGVFCAILGSPTSFHTSSQLSVKDEILKISFKSKQPTIPIFSTVTTNLYDEMNPFDTKYVYDNIINPVRFTNTISNIYKHIELNYSVNNNSNEVIFIEIAPHPTLSFYLKQMVPEDKKQSVSIFSPLSKKKSNDLFEIQKLISELYCLGYNGIGFNIQLSDHNNTNNQTRVNLPLYQWEDQEYWKLDNLHQYHLSNGPSINHLGISNSNHTPIKSYQTHINIQKKPFQWLKGHQIKGKYYFPGCGYIDNILKIFGESKTDTNPNKELPDILISFIEFKTPLIFMDGISQCLQTNIHSTGKKEYKALFHFKDEKSSSDWVQTSTANFQLFSRGPNLNEDDEQSLFMYNINDLISNQCNLTKLSKQELYSHIKTKCGLNYSGDFQRVDKCYLGYNCSLSEISIIQGVNENRSTFFDSSIIDCCLHGSIGLIDENCQLVFEKLEELTYYSSKVPKTTSQHSKIYVYSKLKPRIGDSYSASIIVMLENGTVLFEMENASFKSTTKIKDPLAMEYPTNEIYSCNLQSKDSLIPSLSSFDHIFKRKIPNEYVDQINIYESFIPKLLFSNINKRCPEITIDEIQSSEIEQLLLKYYKIKEDNDNKWLSRLFTFAFESIKQWYHNEDYDFENVLSPHNFKIFSKSTKIISKLLFPLENDNDEDSPQSLFEGGLLDKFYSSGFSAQNELVGEIIQESIKPILNEKLVFRILEFGGGVGSLSLLVLEKINSLLIQYPNYQIDIEYTWSDISPSFITEAKAKFEKFNDRFNIIYKALNLEQPLIGEKQGLKPQYFDYIIMFNVLHVIKDVKYGVEQIYQLLVPNGHLLFIEPIYKSIIGDGIFGVFDQWWSFQDTEIRKDRCCMKQKTWYKLLKSVNFNDDIRMTPELTCFVIQAQKPSISNLSFSKSETTNYDSIIVFGNKYASNLSNHFIKSIDNGNLQFISTIEELNKIGKYISNESIIYFIKSIDELSVDNFVNITHEYTQINQKLMELNCKCKHVLITNDSTTTNYLSSSLIGAARYYHECPLELFILNFDTPSIIENQNLFKTIEPLINSSINIQREFIINNHKVYYERIKNETKLKSIFKNSSSFESLEQVDNFMISLTPNLEYKVKVKPTSILKENEVEIKVMSTGLNYKDYLIYAGLVESVEPIFGIEFSGIITRISTGSKEFKVGDHVYGIGKSTTSSHIITDIDVISHKPSNISHSEASSIPVVYLTSYHSLYNIGALKNNETILIHSATGGVGLSTLEILKWKGHSGLIFVTVGSNEKEEYLRENYGDMISGIYSTRNKNFVKQIKSKISKLNPFGKSGVDFILNTLSSSDYMDSNFKCLNMSGRIVDLSITHLNSNEFTDNKKFKYNYGYHNIELQYVDKKIIKSTLSIISNAVSSNDLQLIPITHYSIEKVKESIEFINERVHMGKIIINHENQDSIINELIEKQKSINKFDQSIFKQNYKLEPSLLGRNILLTGQSGIVLEILKWILRNSENNSIGNIIILSKSSIKWEMEYLINKVKLINKLGNFFNNIKFHFKSVDISDSGLIDESINKLLIENPDINNIDSIFHFAYTQATCNSDEVDLHHLTQSHSAKSMGAINLHNQSIKRNWKLKNFIMSSSVSSKTSTANQCGYISSNNVLDALSKYRISIGLPTICTNYGLIESTGFVSRNESVAALLSGEGFIPISANLILGTLDLQLQNQAQSSNLILSNFNFTSLNGLPQKSLISKFDYQININEENEKSKSLLKDDNVELTVDQLITFKISEILSTDILKLNKDIILVDYGIDSLVIIQLKNWVDKEFSIPNELTIQKIQNSTINSFIQLVKNSMDKNKK.

In terms of domain architecture, Ketosynthase family 3 (KS3) spans 11 to 441 (CNKVAIIGIG…GSNCCLIVSS (431 aa)). Active-site for beta-ketoacyl synthase activity residues include Cys177, His318, and His360. Residues 628–661 (GIKPSIIVGHSLGEISSSYCSGMIDLDTFCYLIY) are acyl/malonyl transferase. Ser638 functions as the For acyl/malonyl transferase activity in the catalytic mechanism. An N-terminal hotdog fold region spans residues 926-1059 (INHLGISNSN…ANFQLFSRGP (134 aa)). One can recognise a PKS/mFAS DH domain in the interval 926-1231 (INHLGISNSN…FKSTTKIKDP (306 aa)). His959 serves as the catalytic Proton acceptor; for dehydratase activity. Residues 1083–1231 (NLTKLSKQEL…FKSTTKIKDP (149 aa)) are C-terminal hotdog fold. The active-site Proton donor; for dehydratase activity is the Asp1145. The Carrier domain occupies 2459–2537 (NVELTVDQLI…SFIQLVKNSM (79 aa)). Position 2496 is an O-(pantetheine 4'-phosphoryl)serine (Ser2496).

It depends on pantetheine 4'-phosphate as a cofactor.

Probable polyketide synthase. This chain is Probable polyketide synthase 41 (pks41), found in Dictyostelium discoideum (Social amoeba).